The primary structure comprises 391 residues: Sister chromatid cohesion protein DCC1 (391 aa).

This sequence belongs to the DCC1 family. Component of the ctf18-RFC complex which consists of ctf18, ctf8, dscc1 and the RFC complex.

Its subcellular location is the nucleus. Its function is as follows. Loads pcna onto primed templates regulating velocity, spacing and restart activity of replication forks. May couple DNA replication to sister chromatid cohesion. The sequence is that of Sister chromatid cohesion protein DCC1 (dscc1) from Xenopus tropicalis (Western clawed frog).